A 452-amino-acid chain; its full sequence is Poly(A) polymerase I (452 aa).

Active-site residues include Asp68, Asp70, and Asp150. The tract at residues 427–452 is disordered; sequence EQQRLHPKPKKKYYRPRRRKTTCSAE. Residues 431-452 show a composition bias toward basic residues; sequence LHPKPKKKYYRPRRRKTTCSAE.

It belongs to the tRNA nucleotidyltransferase/poly(A) polymerase family.

The enzyme catalyses RNA(n) + ATP = RNA(n)-3'-adenine ribonucleotide + diphosphate. In terms of biological role, adds poly(A) tail to the 3' end of many RNAs, which usually targets these RNAs for decay. Plays a significant role in the global control of gene expression, through influencing the rate of transcript degradation, and in the general RNA quality control. This is Poly(A) polymerase I from Haemophilus influenzae (strain ATCC 51907 / DSM 11121 / KW20 / Rd).